The following is a 257-amino-acid chain: Deoxyribose-phosphate aldolase (257 aa).

Aspartate 102 acts as the Proton donor/acceptor in catalysis. Lysine 166 (schiff-base intermediate with acetaldehyde) is an active-site residue. Residue lysine 198 is the Proton donor/acceptor of the active site.

The protein belongs to the DeoC/FbaB aldolase family. DeoC type 2 subfamily.

It is found in the cytoplasm. It carries out the reaction 2-deoxy-D-ribose 5-phosphate = D-glyceraldehyde 3-phosphate + acetaldehyde. The protein operates within carbohydrate degradation; 2-deoxy-D-ribose 1-phosphate degradation; D-glyceraldehyde 3-phosphate and acetaldehyde from 2-deoxy-alpha-D-ribose 1-phosphate: step 2/2. Functionally, catalyzes a reversible aldol reaction between acetaldehyde and D-glyceraldehyde 3-phosphate to generate 2-deoxy-D-ribose 5-phosphate. This is Deoxyribose-phosphate aldolase from Shewanella amazonensis (strain ATCC BAA-1098 / SB2B).